A 292-amino-acid chain; its full sequence is Glutamate racemase (292 aa).

Substrate is bound by residues 28–29 and 60–61; these read DS and YG. Cysteine 91 functions as the Proton donor/acceptor in the catalytic mechanism. Residue 92–93 participates in substrate binding; sequence NT. Catalysis depends on cysteine 200, which acts as the Proton donor/acceptor. A substrate-binding site is contributed by 201 to 202; it reads TH.

Belongs to the aspartate/glutamate racemases family.

The enzyme catalyses L-glutamate = D-glutamate. It participates in cell wall biogenesis; peptidoglycan biosynthesis. In terms of biological role, provides the (R)-glutamate required for cell wall biosynthesis. The polypeptide is Glutamate racemase (Nostoc sp. (strain PCC 7120 / SAG 25.82 / UTEX 2576)).